The following is a 249-amino-acid chain: Segregation and condensation protein A (249 aa).

It belongs to the ScpA family. As to quaternary structure, component of a cohesin-like complex composed of ScpA, ScpB and the Smc homodimer, in which ScpA and ScpB bind to the head domain of Smc. The presence of the three proteins is required for the association of the complex with DNA.

It localises to the cytoplasm. Its function is as follows. Participates in chromosomal partition during cell division. May act via the formation of a condensin-like complex containing Smc and ScpB that pull DNA away from mid-cell into both cell halves. This is Segregation and condensation protein A from Oceanobacillus iheyensis (strain DSM 14371 / CIP 107618 / JCM 11309 / KCTC 3954 / HTE831).